The primary structure comprises 118 residues: UPF0102 protein DICTH_1420 (118 aa).

This sequence belongs to the UPF0102 family.

In Dictyoglomus thermophilum (strain ATCC 35947 / DSM 3960 / H-6-12), this protein is UPF0102 protein DICTH_1420.